A 290-amino-acid polypeptide reads, in one-letter code: 2-dehydropantoate 2-reductase (290 aa).

Residues 8 to 13, Asn98, and Ala124 each bind NADP(+); that span reads GPGAVG. Asn98 lines the substrate pocket. The active-site Proton donor is the Lys175. Substrate-binding residues include Asn179 and Ser244. Position 256 (Glu256) interacts with NADP(+).

This sequence belongs to the ketopantoate reductase family.

It localises to the cytoplasm. The enzyme catalyses (R)-pantoate + NADP(+) = 2-dehydropantoate + NADPH + H(+). Its pathway is cofactor biosynthesis; (R)-pantothenate biosynthesis; (R)-pantoate from 3-methyl-2-oxobutanoate: step 2/2. In terms of biological role, catalyzes the NADPH-dependent reduction of ketopantoate into pantoic acid. This is 2-dehydropantoate 2-reductase from Caulobacter vibrioides (strain ATCC 19089 / CIP 103742 / CB 15) (Caulobacter crescentus).